The following is a 729-amino-acid chain: Fatty acid oxidation complex subunit alpha (729 aa).

The tract at residues 1-189 (MLYKGDTLYL…KIGLVDGVVK (189 aa)) is enoyl-CoA hydratase/isomerase. Substrate is bound at residue D296. Residues 311–729 (ETPKQAAVLG…ARPVGDLKTA (419 aa)) form a 3-hydroxyacyl-CoA dehydrogenase region. Residues M324, D343, 400-402 (VVE), K407, and S429 each bind NAD(+). The active-site For 3-hydroxyacyl-CoA dehydrogenase activity is H450. N453 lines the NAD(+) pocket. Positions 500 and 660 each coordinate substrate. Positions 708-729 (RHNEPYYPPVEPARPVGDLKTA) are disordered.

In the N-terminal section; belongs to the enoyl-CoA hydratase/isomerase family. The protein in the C-terminal section; belongs to the 3-hydroxyacyl-CoA dehydrogenase family. As to quaternary structure, heterotetramer of two alpha chains (FadB) and two beta chains (FadA).

The enzyme catalyses a (3S)-3-hydroxyacyl-CoA + NAD(+) = a 3-oxoacyl-CoA + NADH + H(+). The catalysed reaction is a (3S)-3-hydroxyacyl-CoA = a (2E)-enoyl-CoA + H2O. It carries out the reaction a 4-saturated-(3S)-3-hydroxyacyl-CoA = a (3E)-enoyl-CoA + H2O. It catalyses the reaction (3S)-3-hydroxybutanoyl-CoA = (3R)-3-hydroxybutanoyl-CoA. The enzyme catalyses a (3Z)-enoyl-CoA = a 4-saturated (2E)-enoyl-CoA. The catalysed reaction is a (3E)-enoyl-CoA = a 4-saturated (2E)-enoyl-CoA. The protein operates within lipid metabolism; fatty acid beta-oxidation. In terms of biological role, involved in the aerobic and anaerobic degradation of long-chain fatty acids via beta-oxidation cycle. Catalyzes the formation of 3-oxoacyl-CoA from enoyl-CoA via L-3-hydroxyacyl-CoA. It can also use D-3-hydroxyacyl-CoA and cis-3-enoyl-CoA as substrate. The protein is Fatty acid oxidation complex subunit alpha of Escherichia coli (strain UTI89 / UPEC).